The following is a 228-amino-acid chain: UPF0758 protein SH1266 (228 aa).

Residues 102–224 (KITSPSDVSN…YASLVEEGYF (123 aa)) form the MPN domain. Residues His-173, His-175, and Asp-186 each coordinate Zn(2+). The JAMM motif motif lies at 173–186 (HNHPSGDVTPSKED).

Belongs to the UPF0758 family.

The chain is UPF0758 protein SH1266 from Staphylococcus haemolyticus (strain JCSC1435).